We begin with the raw amino-acid sequence, 493 residues long: UDP-glucose 6-dehydrogenase (493 aa).

NAD(+) contacts are provided by residues 11 to 16 (GAGYVG), Asp36, Arg41, and 89 to 93 (VNTPT). The segment at 88–110 (SVNTPTKTYGMGKGRAADLKYIE) is disordered. Lys107 bears the N6-acetyllysine mark. An allosteric switch region region spans residues 129–135 (KSTVPVR). Position 130–132 (130–132 (STV)) interacts with NAD(+). Residue Glu161 is the Proton donor/acceptor of the active site. Substrate is bound by residues 161–165 (EFLAE), 220–224 (KLAAN), Arg260, and 267–273 (KASVGFG). Residue Glu165 participates in NAD(+) binding. The Proton donor/acceptor role is filled by Lys220. Cys276 serves as the catalytic Nucleophile. NAD(+) is bound at residue 276-279 (CFQK). The tract at residues 321 to 325 (SLFNT) is important for formation of active hexamer structure. 338–339 (FK) provides a ligand contact to substrate. Arg346 serves as a coordination point for NAD(+). Residue Arg442 participates in substrate binding. The disordered stretch occupies residues 466–493 (VSSKRIPYTPGEIPKFSLQDPPNKKPKV). Thr474 carries the phosphothreonine modification.

It belongs to the UDP-glucose/GDP-mannose dehydrogenase family. As to quaternary structure, homohexamer.

It catalyses the reaction UDP-alpha-D-glucose + 2 NAD(+) + H2O = UDP-alpha-D-glucuronate + 2 NADH + 3 H(+). It participates in nucleotide-sugar biosynthesis; UDP-alpha-D-glucuronate biosynthesis; UDP-alpha-D-glucuronate from UDP-alpha-D-glucose: step 1/1. Its activity is regulated as follows. UDP-alpha-D-xylose (UDX) acts as a feedback inhibitor. It binds at the same site as the substrate, but functions as allosteric inhibitor by triggering a conformation change that disrupts the active hexameric ring structure and gives rise to an inactive, horseshoe-shaped hexamer. In terms of biological role, catalyzes the formation of UDP-alpha-D-glucuronate, a constituent of complex glycosaminoglycans. Required for the biosynthesis of chondroitin sulfate and heparan sulfate. Required for embryonic development via its role in the biosynthesis of glycosaminoglycans. Required for proper brain and neuronal development. The polypeptide is UDP-glucose 6-dehydrogenase (Ugdh) (Mus musculus (Mouse)).